The primary structure comprises 1178 residues: Leucine--tRNA ligase, cytoplasmic (1178 aa).

The L-leucine site is built by Tyr54 and Tyr56. Residues 62–65 carry the 'HIGH' region motif; sequence HLGH. Ser169 is modified (phosphoserine). Positions 262–511 are editing domain; the sequence is GPQEYTLVKL…DAGDALIYME (250 aa). Leu596 and Ser599 together coordinate L-leucine. The 'KMSKS' region signature appears at 718–722; that stretch reads KMSKS. An ATP-binding site is contributed by Lys721. Position 722 is a phosphoserine (Ser722). N6-acetyllysine is present on residues Lys972 and Lys1049.

Belongs to the class-I aminoacyl-tRNA synthetase family.

The protein resides in the cytoplasm. The catalysed reaction is tRNA(Leu) + L-leucine + ATP = L-leucyl-tRNA(Leu) + AMP + diphosphate. It catalyses the reaction L-methionyl-tRNA(Leu) + H2O = tRNA(Leu) + L-methionine + H(+). 5-fluoro-1,3-dihydro-1-hydroxy-1,2-benzoxaborole inhibits LARS1 by forming a covalent adduct with the 3' adenosine of tRNA(Leu) at the editing site, thus locking the enzyme in an inactive conformation. Functionally, aminoacyl-tRNA synthetase that catalyzes the specific attachment of leucine to its cognate tRNA (tRNA(Leu)). It performs tRNA aminoacylation in a two-step reaction: Leu is initially activated by ATP to form a leucyl-adenylate (Leu-AMP) intermediate; then the leucyl moiety is transferred to the acceptor 3' end of the tRNA to yield leucyl-tRNA. To improve the fidelity of catalytic reactions, it is also able to hydrolyze misactivated aminoacyl-adenylate intermediates (pre-transfer editing) and mischarged aminoacyl-tRNAs (post-transfer editing). The protein is Leucine--tRNA ligase, cytoplasmic (Lars1) of Mus musculus (Mouse).